A 257-amino-acid chain; its full sequence is Electron transfer flavoprotein subunit beta (257 aa).

The protein belongs to the ETF beta-subunit/FixA family. In terms of assembly, heterodimer of an alpha and a beta subunit. Requires FAD as cofactor. AMP serves as cofactor.

The electron transfer flavoprotein serves as a specific electron acceptor for other dehydrogenases. It transfers the electrons to the main respiratory chain via ETF-ubiquinone oxidoreductase (ETF dehydrogenase). This is Electron transfer flavoprotein subunit beta (etfB) from Bacillus subtilis (strain 168).